Here is a 1250-residue protein sequence, read N- to C-terminus: Minor capsid protein M1249L (1250 aa).

Belongs to the asfivirus M1249L family. Interacts with the minor capsid protein p17 and with the hexon capsid protein p72 capsomers; these interactions form a rigid zipper structure that stabilizes the capsomers. Interacts with host IRF3.

Its subcellular location is the virion. It is found in the host cytoplasm. Together with the penton and the other minor capsid proteins (p17, p49), forms a complicated network immediately below the outer capsid shell, stabilizing the whole capsid. In addition, blocks IFN-beta transactivation mediated by the cGAS-STING pathway and regulates the transcriptional activity of IFN-beta. Mechanistically, suppresses the phosphorylation of host key adapter protein TBK1 and degrades host IRF3 in the cytoplasm. The chain is Minor capsid protein M1249L from Ornithodoros (relapsing fever ticks).